The following is a 463-amino-acid chain: D-inositol 3-phosphate glycosyltransferase (463 aa).

1D-myo-inositol 3-phosphate is bound at residue His40. UDP-N-acetyl-alpha-D-glucosamine is bound by residues 46-47 (QP) and Gly54. 1D-myo-inositol 3-phosphate-binding positions include 51 to 56 (DAGGMN), Lys109, Tyr142, Thr166, and Arg186. Residues Arg260, Lys265, and Gln318 each coordinate UDP-N-acetyl-alpha-D-glucosamine. Mg(2+)-binding residues include Phe327, His328, and Val330. UDP-N-acetyl-alpha-D-glucosamine contacts are provided by Glu340 and Glu348. Thr354 contacts Mg(2+). A disordered region spans residues 443–463 (VRDPVAARKPRRWTARRGVGA).

It belongs to the glycosyltransferase group 1 family. MshA subfamily. In terms of assembly, homodimer.

It carries out the reaction 1D-myo-inositol 3-phosphate + UDP-N-acetyl-alpha-D-glucosamine = 1D-myo-inositol 2-acetamido-2-deoxy-alpha-D-glucopyranoside 3-phosphate + UDP + H(+). In terms of biological role, catalyzes the transfer of a N-acetyl-glucosamine moiety to 1D-myo-inositol 3-phosphate to produce 1D-myo-inositol 2-acetamido-2-deoxy-glucopyranoside 3-phosphate in the mycothiol biosynthesis pathway. The sequence is that of D-inositol 3-phosphate glycosyltransferase from Mycobacterium ulcerans (strain Agy99).